The sequence spans 87 residues: Small ribosomal subunit protein bS20 (87 aa).

This sequence belongs to the bacterial ribosomal protein bS20 family.

In terms of biological role, binds directly to 16S ribosomal RNA. This is Small ribosomal subunit protein bS20 from Clostridium perfringens (strain 13 / Type A).